A 546-amino-acid chain; its full sequence is Glutathione synthetase, chloroplastic (546 aa).

A chloroplast-targeting transit peptide spans methionine 1–glutamate 63. Arginine 200 is a substrate binding site. Glutamate 216 is a binding site for ATP. 2 residues coordinate Mg(2+): glutamate 216 and asparagine 218. Substrate contacts are provided by residues isoleucine 220 to serine 223, glutamate 288 to asparagine 290, glutamine 294, and arginine 342 to tyrosine 345. ATP is bound by residues lysine 381, lysine 435–asparagine 444, tyrosine 446, methionine 471–isoleucine 474, and glutamate 497. Glutamate 439 is a Mg(2+) binding site. Arginine 522 serves as a coordination point for substrate. Residues lysine 524 and glutamate 530 each contribute to the ATP site. A substrate-binding site is contributed by valine 533–alanine 534.

The protein belongs to the eukaryotic GSH synthase family. As to quaternary structure, homodimer. Mg(2+) is required as a cofactor.

The protein localises to the plastid. Its subcellular location is the chloroplast. It carries out the reaction gamma-L-glutamyl-L-cysteine + glycine + ATP = glutathione + ADP + phosphate + H(+). It participates in sulfur metabolism; glutathione biosynthesis; glutathione from L-cysteine and L-glutamate: step 2/2. In Solanum lycopersicum (Tomato), this protein is Glutathione synthetase, chloroplastic (GSH2).